The following is a 306-amino-acid chain: Glutathione transport system permease protein GsiC (306 aa).

Topologically, residues 1 to 8 (MLNYVLKR) are cytoplasmic. The chain crosses the membrane as a helical span at residues 9–29 (LLGLIPTLLIVAVLVFLFVHL). At 30–102 (LPGDPARLIA…SRFLPTLWLT (73 aa)) the chain is on the periplasmic side. Residues 95–292 (FLPTLWLTIT…LEFILINLVV (198 aa)) form the ABC transmembrane type-1 domain. The chain crosses the membrane as a helical span at residues 103-123 (ITSMIWAVLFGMAIGIAAAVW). At 124-134 (RNRWPDRLGMT) the chain is on the cytoplasmic side. The helical transmembrane segment at 135-155 (LAVTGISFPAFALGMLLMQIF) threads the bilayer. The Periplasmic segment spans residues 156–168 (SVDLGWLPTVGAD). The chain crosses the membrane as a helical span at residues 169–189 (SWQHYILPSLTLGAAVASVMA). Over 190–228 (RFTRSSFVDVLSEDYMRTARAKGVSETWVVLKHGLRNAM) the chain is Cytoplasmic. The chain crosses the membrane as a helical span at residues 229 to 249 (IPVVTMMGLQFGFLLGGSIVV). The Periplasmic segment spans residues 250–278 (EKVFNWPGLGRLLVDSVDMRDYPVIQAEV). A helical membrane pass occupies residues 279 to 299 (LLFSLEFILINLVVDVLYAAI). Topologically, residues 300–306 (NPAIRYK) are cytoplasmic.

This sequence belongs to the binding-protein-dependent transport system permease family. As to quaternary structure, the complex is composed of two ATP-binding proteins (GsiA), two transmembrane proteins (GsiC and GsiD) and a solute-binding protein (GsiB).

The protein resides in the cell inner membrane. Its function is as follows. Part of the ABC transporter complex GsiABCD involved in glutathione import. Probably responsible for the translocation of the substrate across the membrane. In Salmonella paratyphi A (strain ATCC 9150 / SARB42), this protein is Glutathione transport system permease protein GsiC.